The sequence spans 277 residues: MNIKLDKVSARHPAAKRDAAAALRGVSLEVSAGEQIAVIGPSGAGKTTLLHVLGCALPPSSGSLQLNARDPWRLPRSKLQLLRGELFLAPQVPPLPPRQRVVTSVLAGRLPHIGLWQSLRSLFYPTAIAQADAALARFDLSDKLFARVDRLSGGERQRVGLARALVTEASLLLVDEPLSALDPTRGQQAIASLTQAARERGATLVSTLHHVEMALQNFPRIIGLRDGELAFDLPAAQVTPERLQALYAQHLHELTGPAHEAFDLPAAATPPAVMHCR.

In terms of domain architecture, ABC transporter spans 3-251 (IKLDKVSARH…RLQALYAQHL (249 aa)). 40–47 (GPSGAGKT) provides a ligand contact to ATP.

The protein belongs to the ABC transporter superfamily. Phosphonates importer (TC 3.A.1.9.1) family. As to quaternary structure, the complex is composed of two ATP-binding proteins (PhnC), two transmembrane proteins (PhnE) and a solute-binding protein (PhnD).

The protein localises to the cell inner membrane. The enzyme catalyses phosphonate(out) + ATP + H2O = phosphonate(in) + ADP + phosphate + H(+). Functionally, part of the ABC transporter complex PhnCDE involved in phosphonates import. Responsible for energy coupling to the transport system. The sequence is that of Phosphonates import ATP-binding protein PhnC from Polaromonas sp. (strain JS666 / ATCC BAA-500).